The following is a 167-amino-acid chain: NAD(P)H-quinone oxidoreductase subunit I, chloroplastic (167 aa).

4Fe-4S ferredoxin-type domains are found at residues 55 to 84 (GRIHFEFDKCIACEVCVRVCPIDLPVVDWK) and 95 to 124 (LNYSIDFGICIFCGNCVEYCPTNCLSMTEE). Residues C64, C67, C70, C74, C104, C107, C110, and C114 each contribute to the [4Fe-4S] cluster site.

This sequence belongs to the complex I 23 kDa subunit family. In terms of assembly, NDH is composed of at least 16 different subunits, 5 of which are encoded in the nucleus. [4Fe-4S] cluster serves as cofactor.

It is found in the plastid. Its subcellular location is the chloroplast thylakoid membrane. It catalyses the reaction a plastoquinone + NADH + (n+1) H(+)(in) = a plastoquinol + NAD(+) + n H(+)(out). The enzyme catalyses a plastoquinone + NADPH + (n+1) H(+)(in) = a plastoquinol + NADP(+) + n H(+)(out). NDH shuttles electrons from NAD(P)H:plastoquinone, via FMN and iron-sulfur (Fe-S) centers, to quinones in the photosynthetic chain and possibly in a chloroplast respiratory chain. The immediate electron acceptor for the enzyme in this species is believed to be plastoquinone. Couples the redox reaction to proton translocation, and thus conserves the redox energy in a proton gradient. This Citrus sinensis (Sweet orange) protein is NAD(P)H-quinone oxidoreductase subunit I, chloroplastic.